The following is a 149-amino-acid chain: Large ribosomal subunit protein bL9 (149 aa).

It belongs to the bacterial ribosomal protein bL9 family.

In terms of biological role, binds to the 23S rRNA. The protein is Large ribosomal subunit protein bL9 of Anaeromyxobacter dehalogenans (strain 2CP-C).